Here is a 165-residue protein sequence, read N- to C-terminus: Short form salivary protein D7R4 (165 aa).

The N-terminal stretch at 1 to 21 is a signal peptide; the sequence is MIRQVITSYFLTVCLLALVQG. 3 disulfide bridges follow: Cys-27–Cys-59, Cys-40–Cys-165, and Cys-98–Cys-117. Residues Glu-28 and Arg-43 each coordinate noradrenaline. Glu-28 is a serotonin binding site. Serotonin is bound by residues His-56, Tyr-115, Asp-132, and Glu-135. Histamine-binding residues include Tyr-115, Asp-132, and Glu-135. The tryptamine site is built by Tyr-115, Asp-132, and Glu-135. Noradrenaline contacts are provided by Asp-132 and Glu-135.

This sequence belongs to the PBP/GOBP family. Female saliva (at protein level). Female salivary gland. Not detected in female carcass without salivary glands. Not detected in male tissues.

Its subcellular location is the secreted. Modulates blood feeding of female mosquitoes on vertebrate species by binding and sequestering different mediators involved in the host response. Binds serotonin, noradrenaline, histamine and tryptamine. Inhibits histamine-, serotonin- and partially noradrenaline-induced smooth muscle contraction. Exhibits vasodilating activity. This is Short form salivary protein D7R4 from Anopheles gambiae (African malaria mosquito).